We begin with the raw amino-acid sequence, 337 residues long: tRNA-cytidine(32) 2-sulfurtransferase (337 aa).

Residues 71–76 carry the PP-loop motif motif; the sequence is SGGKDS. Cys-146, Cys-149, and Cys-237 together coordinate [4Fe-4S] cluster.

The protein belongs to the TtcA family. In terms of assembly, homodimer. The cofactor is Mg(2+). It depends on [4Fe-4S] cluster as a cofactor.

Its subcellular location is the cytoplasm. It carries out the reaction cytidine(32) in tRNA + S-sulfanyl-L-cysteinyl-[cysteine desulfurase] + AH2 + ATP = 2-thiocytidine(32) in tRNA + L-cysteinyl-[cysteine desulfurase] + A + AMP + diphosphate + H(+). Its pathway is tRNA modification. In terms of biological role, catalyzes the ATP-dependent 2-thiolation of cytidine in position 32 of tRNA, to form 2-thiocytidine (s(2)C32). The sulfur atoms are provided by the cysteine/cysteine desulfurase (IscS) system. This Burkholderia vietnamiensis (strain G4 / LMG 22486) (Burkholderia cepacia (strain R1808)) protein is tRNA-cytidine(32) 2-sulfurtransferase.